The sequence spans 432 residues: Cyclin-A2 (432 aa).

Position 1 is an N-acetylmethionine (Met-1). Ser-5 is subject to Phosphoserine. Disordered stretches follow at residues 26–45 and 55–75; these read LQEDQENINPEKAAPVQQPR and SGNPRGLAQQQRPKTRRVAPL. A Phosphoserine modification is found at Ser-55.

This sequence belongs to the cyclin family. Cyclin AB subfamily. As to quaternary structure, interacts with the CDK1 and CDK2 protein kinases to form serine/threonine kinase holoenzyme complexes. Interacts with CDK1 (hyperphosphorylated form in G1 and underphosphorylated forms in S and G2). Interacts with CDK2; the interaction increases from G1 to G2. Interacts (associated with CDK2 but not with CDK1) with SCAPER; regulates the activity of CCNA2/CDK2 by transiently maintaining CCNA2 in the cytoplasm. Forms a ternary complex with CDK2 and CDKN1B; CDKN1B inhibits the kinase activity of CDK2 through conformational rearrangements. Interacts with INCA1. (Microbial infection) Interacts with human cytomegalovirus protein UL32. In terms of processing, polyubiquitinated via 'Lys-11'-linked ubiquitin by the anaphase-promoting complex (APC/C), leading to its degradation by the proteasome. Deubiquitinated and stabilized by USP37 enables entry into S phase. Ubiquitinated during the G1 phase by the SCF(FBXO31) complex, leading to its proteasomal degradation.

It localises to the nucleus. The protein localises to the cytoplasm. Its function is as follows. Cyclin which controls both the G1/S and the G2/M transition phases of the cell cycle. Functions through the formation of specific serine/threonine protein kinase holoenzyme complexes with the cyclin-dependent protein kinases CDK1 or CDK2. The cyclin subunit confers the substrate specificity of these complexes and differentially interacts with and activates CDK1 and CDK2 throughout the cell cycle. In Homo sapiens (Human), this protein is Cyclin-A2.